Here is a 216-residue protein sequence, read N- to C-terminus: Peptide methionine sulfoxide reductase MsrA (216 aa).

Cys54 is an active-site residue.

This sequence belongs to the MsrA Met sulfoxide reductase family.

It catalyses the reaction L-methionyl-[protein] + [thioredoxin]-disulfide + H2O = L-methionyl-(S)-S-oxide-[protein] + [thioredoxin]-dithiol. The enzyme catalyses [thioredoxin]-disulfide + L-methionine + H2O = L-methionine (S)-S-oxide + [thioredoxin]-dithiol. Has an important function as a repair enzyme for proteins that have been inactivated by oxidation. Catalyzes the reversible oxidation-reduction of methionine sulfoxide in proteins to methionine. This chain is Peptide methionine sulfoxide reductase MsrA, found in Xanthomonas euvesicatoria pv. vesicatoria (strain 85-10) (Xanthomonas campestris pv. vesicatoria).